The following is a 186-amino-acid chain: MSVKPAALFRISAALAVAGLGASLIASAALAQATSSRMQGLQLSNDQPIQIESDKLEIKDPESKAIFTGNVKVVQGTTTLQAGNMTVFYKAGGGSVTSGNADIDRIEVSNKVFLSSGAQQATGESGIVNLTNQTIVLKGKKVVLSEGKNVFVGCQLNVQMDTGEAQLDACGGRVQIQLDPQSRKTN.

A signal peptide spans 1 to 28; that stretch reads MSVKPAALFRISAALAVAGLGASLIASA.

This is an uncharacterized protein from Rhizobium meliloti (strain 1021) (Ensifer meliloti).